The sequence spans 422 residues: Glutamate-1-semialdehyde 2,1-aminomutase (422 aa).

Lys-258 carries the post-translational modification N6-(pyridoxal phosphate)lysine.

Belongs to the class-III pyridoxal-phosphate-dependent aminotransferase family. HemL subfamily. As to quaternary structure, homodimer. The cofactor is pyridoxal 5'-phosphate.

The protein resides in the cytoplasm. It carries out the reaction (S)-4-amino-5-oxopentanoate = 5-aminolevulinate. Its pathway is porphyrin-containing compound metabolism; protoporphyrin-IX biosynthesis; 5-aminolevulinate from L-glutamyl-tRNA(Glu): step 2/2. The chain is Glutamate-1-semialdehyde 2,1-aminomutase from Chlamydia trachomatis serovar D (strain ATCC VR-885 / DSM 19411 / UW-3/Cx).